A 52-amino-acid chain; its full sequence is Phospholamban (52 aa).

Methionine 1 carries the post-translational modification N-acetylmethionine. The Cytoplasmic portion of the chain corresponds to 1–31; that stretch reads MDKVQYLTRSAIRRASTIEMPQQARQNLQNL. Phosphoserine; by PKA and DMPK is present on serine 16. Threonine 17 bears the Phosphothreonine; by CaMK2 mark. The chain crosses the membrane as a helical span at residues 32–52; it reads FINFCLILICLLLICIIVMLL. Cysteine 36 is lipidated: S-palmitoyl cysteine.

Belongs to the phospholamban family. Homopentamer. Can also form heterooligomers with other sarcoplasmic/endoplasmic reticulum calcium ATPase (SERCA) regulators ARLN, ERLN, SLN and STRIT1/DWORF. Monomer. Interacts with HAX1. Interacts as a monomer with ATP2A2; the interaction decreases ATP2A2 Ca(2+) affinity. Interacts with VMP1; VMP1 competes with PLN and SLN to prevent them from forming an inhibitory complex with ATP2A2. Interacts with S100A1 in a Ca(2+)-dependent manner. Phosphorylation by DMPK may stimulate sarcoplasmic reticulum calcium uptake in cardiomyocytes. Phosphorylation by PKA abolishes the inhibition of ATP2A2-mediated calcium uptake. Phosphorylated at Thr-17 by CaMK2, and in response to beta-adrenergic stimulation. In terms of processing, palmitoylated by ZDHHC16, promoting formation of the homopentamer. Post-translationally, in elongated spermatids, proteolytically cleaved by SPPL2C which modulates intracellular Ca(2+) homeostasis. In terms of tissue distribution, heart.

Its subcellular location is the endoplasmic reticulum membrane. It localises to the sarcoplasmic reticulum membrane. The protein localises to the mitochondrion membrane. The protein resides in the membrane. In terms of biological role, reversibly inhibits the activity of ATP2A2/SERCA2 in cardiac sarcoplasmic reticulum by decreasing the apparent affinity of the ATPase for Ca(2+). Binds preferentially to the ATP-bound E1 conformational form of ATP2A2 which predominates at low Ca(2+) concentrations during the diastolic phase of the cardiac cycle. Inhibits ATP2A2 Ca(2+) affinity by disrupting its allosteric activation by ATP. Modulates the contractility of the heart muscle in response to physiological stimuli via its effects on ATP2A2. Modulates calcium re-uptake during muscle relaxation and plays an important role in calcium homeostasis in the heart muscle. The degree of ATP2A2 inhibition depends on the oligomeric state of PLN. ATP2A2 inhibition is alleviated by PLN phosphorylation. Also inhibits the activity of ATP2A3/SERCA3. Controls intracellular Ca(2+) levels in elongated spermatids and may play a role in germ cell differentiation. In the thalamic reticular nucleus of the brain, plays a role in the regulation of sleep patterns and executive functioning. The chain is Phospholamban from Canis lupus familiaris (Dog).